The sequence spans 547 residues: Chaperonin GroEL (547 aa).

ATP-binding positions include 29–32, 86–90, G413, 479–481, and D495; these read TLGP, DGTTT, and NAA.

It belongs to the chaperonin (HSP60) family. Forms a cylinder of 14 subunits composed of two heptameric rings stacked back-to-back. Interacts with the co-chaperonin GroES.

It is found in the cytoplasm. The catalysed reaction is ATP + H2O + a folded polypeptide = ADP + phosphate + an unfolded polypeptide.. Together with its co-chaperonin GroES, plays an essential role in assisting protein folding. The GroEL-GroES system forms a nano-cage that allows encapsulation of the non-native substrate proteins and provides a physical environment optimized to promote and accelerate protein folding. This Synechococcus sp. (strain RCC307) protein is Chaperonin GroEL.